The sequence spans 129 residues: M-zodatoxin-Lt8d (129 aa).

Residues 1–20 (MKYFVVALALVAAFACIAES) form the signal peptide. The propeptide occupies 21 to 60 (KPAESEHELAEVEEENELADLEDAVWLEHLADLSDLEEAR). The short motif at 57–60 (EEAR) is the Processing quadruplet motif element.

Post-translationally, cleavage of the propeptide depends on the processing quadruplet motif (XXXR, with at least one of X being E). As to expression, expressed by the venom gland.

The protein resides in the secreted. Insecticidal, cytolytic and antimicrobial peptide. Forms voltage-dependent, ion-permeable channels in membranes. At high concentration causes cell membrane lysis. This Lachesana tarabaevi (Spider) protein is M-zodatoxin-Lt8d (cit 1-4).